A 405-amino-acid polypeptide reads, in one-letter code: Scarecrow-like protein 23 (405 aa).

The disordered stretch occupies residues 1–20 (MTTKRIDRDLPSSDDPSSAK). Positions 31–400 (ENDGAAAIKL…LSLLTASAWK (370 aa)) constitute a GRAS domain. The leucine repeat I (LRI) stretch occupies residues 38-102 (IKLLSLLLQC…ISSYLSGACS (65 aa)). The LxCxE motif motif lies at 45-49 (LQCAE). Residues 121-186 (LQTYNSVSPL…RKLRSIRITG (66 aa)) are VHIID. The VHIID motif lies at 152–156 (VHIID). The segment at 196-228 (STGRRLADFASSLNLPFEFHPIEGIIGNLIDPS) is leucine repeat II (LRII). Residues 238 to 327 (VVVHWMQHRL…QIVLGTEIRN (90 aa)) are PFYRE. An SAW region spans residues 330-400 (AHGGGRRKRM…LSLLTASAWK (71 aa)).

Belongs to the GRAS family. As to quaternary structure, interacts with SHR. As to expression, expressed in seedlings, cotyledons, shoot apex, leaves and flowers.

The protein localises to the nucleus. Probable transcription factor involved in plant development. This is Scarecrow-like protein 23 (SCL23) from Arabidopsis thaliana (Mouse-ear cress).